The chain runs to 369 residues: Homoserine O-succinyltransferase (369 aa).

Residues 90–93 are important for substrate specificity; the sequence is GISA. An AB hydrolase-1 domain is found at 107-353; it reads WWSGAVGVRA…YGHDAFLKED (247 aa). S175 serves as the catalytic Nucleophile. Residue R236 participates in substrate binding. Residues D316 and H346 contribute to the active site. A substrate-binding site is contributed by D347.

It belongs to the AB hydrolase superfamily. MetX family. As to quaternary structure, homodimer.

It localises to the cytoplasm. It catalyses the reaction L-homoserine + succinyl-CoA = O-succinyl-L-homoserine + CoA. The protein operates within amino-acid biosynthesis; L-methionine biosynthesis via de novo pathway; O-succinyl-L-homoserine from L-homoserine: step 1/1. Functionally, transfers a succinyl group from succinyl-CoA to L-homoserine, forming succinyl-L-homoserine. This Brevundimonas diminuta (strain ATCC 11568 / DSM 7234 / NBRC 12697 / NCIMB 9393 / NCTC 8545) protein is Homoserine O-succinyltransferase.